The primary structure comprises 149 residues: Large ribosomal subunit protein bL9 (149 aa).

It belongs to the bacterial ribosomal protein bL9 family.

Its function is as follows. Binds to the 23S rRNA. The sequence is that of Large ribosomal subunit protein bL9 from Actinobacillus succinogenes (strain ATCC 55618 / DSM 22257 / CCUG 43843 / 130Z).